The primary structure comprises 620 residues: Protein NRT1/ PTR FAMILY 2.13 (620 aa).

The disordered stretch occupies residues 1 to 32 (MVLEDRKDGSSLPGRSGSFSKSSPSELDVVDP). A compositionally biased stretch (low complexity) spans 10 to 25 (SSLPGRSGSFSKSSPS). 12 helical membrane-spanning segments follow: residues 70-90 (LGSI…FHLE), 95-115 (ANVI…GAYI), 126-146 (IAFA…TASF), 167-187 (KLQI…SGGI), 213-233 (FFNW…TVVV), 241-261 (WIIG…MFFA), 364-384 (IVPI…QGTF), 402-422 (IPAG…LPFY), 443-463 (LQRI…AGIV), 485-505 (VFWL…NIIG), 524-544 (SLFS…VTVV), and 568-588 (YFYY…WYCA).

The protein belongs to the major facilitator superfamily. Proton-dependent oligopeptide transporter (POT/PTR) (TC 2.A.17) family. In terms of assembly, interacts with NLA. Post-translationally, ubiquitinated by NLA. Ubiquitination of NPF2.13 leads to its degradation by the proteasome. Expressed in leaves and flowers. Detected in stems and siliques. Highest expression in the distal lamina of older leaves. Restricted to the sieve element and companion cell complex of the minor vein.

It is found in the cell membrane. Its function is as follows. Low-affinity proton-dependent nitrate transporter. Not involved in dipeptides transport, but has a weak glucosinolate transport activity. Involved in phloem loading and nitrate remobilization from the older leaves to other tissues. The chain is Protein NRT1/ PTR FAMILY 2.13 (NPF2.13) from Arabidopsis thaliana (Mouse-ear cress).